Consider the following 346-residue polypeptide: D-alanine--D-alanine ligase (346 aa).

In terms of domain architecture, ATP-grasp spans 133–327; sequence KLYAKSVGVK…TLADQIPLEK (195 aa). 159–211 is an ATP binding site; the sequence is LRFPCIIKPARLGSSIGISIVKDEKDLEYAKDVGFEFDNDLVVEEFKNNIKEY. The Mg(2+) site is built by D284, E296, and N298.

It belongs to the D-alanine--D-alanine ligase family. Mg(2+) serves as cofactor. Mn(2+) is required as a cofactor.

The protein localises to the cytoplasm. It carries out the reaction 2 D-alanine + ATP = D-alanyl-D-alanine + ADP + phosphate + H(+). Its pathway is cell wall biogenesis; peptidoglycan biosynthesis. Cell wall formation. This Campylobacter jejuni subsp. doylei (strain ATCC BAA-1458 / RM4099 / 269.97) protein is D-alanine--D-alanine ligase.